Consider the following 214-residue polypeptide: ATP-dependent Clp protease proteolytic subunit (214 aa).

S113 functions as the Nucleophile in the catalytic mechanism. Residue H138 is part of the active site.

It belongs to the peptidase S14 family. In terms of assembly, fourteen ClpP subunits assemble into 2 heptameric rings which stack back to back to give a disk-like structure with a central cavity, resembling the structure of eukaryotic proteasomes.

It localises to the cytoplasm. It carries out the reaction Hydrolysis of proteins to small peptides in the presence of ATP and magnesium. alpha-casein is the usual test substrate. In the absence of ATP, only oligopeptides shorter than five residues are hydrolyzed (such as succinyl-Leu-Tyr-|-NHMec, and Leu-Tyr-Leu-|-Tyr-Trp, in which cleavage of the -Tyr-|-Leu- and -Tyr-|-Trp bonds also occurs).. Cleaves peptides in various proteins in a process that requires ATP hydrolysis. Has a chymotrypsin-like activity. Plays a major role in the degradation of misfolded proteins. The polypeptide is ATP-dependent Clp protease proteolytic subunit (Teredinibacter turnerae (strain ATCC 39867 / T7901)).